The primary structure comprises 225 residues: Small ribosomal subunit protein uS3 (225 aa).

The 69-residue stretch at 38–106 folds into the KH type-2 domain; it reads LRGHLRKKLS…DVALNIVEIR (69 aa).

It belongs to the universal ribosomal protein uS3 family. As to quaternary structure, part of the 30S ribosomal subunit. Forms a tight complex with proteins S10 and S14.

Its function is as follows. Binds the lower part of the 30S subunit head. Binds mRNA in the 70S ribosome, positioning it for translation. The protein is Small ribosomal subunit protein uS3 of Granulibacter bethesdensis (strain ATCC BAA-1260 / CGDNIH1).